A 379-amino-acid chain; its full sequence is Acetylajmalan esterase 1 (379 aa).

Residues methionine 1–glycine 20 form the signal peptide. The Nucleophile role is filled by serine 34. N-linked (GlcNAc...) asparagine glycosylation is found at asparagine 96, asparagine 178, asparagine 197, and asparagine 291. Residues aspartate 332 and histidine 335 contribute to the active site.

It belongs to the 'GDSL' lipolytic enzyme family. As to expression, expressed in roots and leaves at low levels.

The enzyme catalyses 17-O-acetylnorajmaline + H2O = norajmaline + acetate + H(+). It catalyses the reaction 17-O-acetylajmaline + H2O = ajmaline + acetate + H(+). It functions in the pathway alkaloid biosynthesis; ajmaline biosynthesis. Acetylesterase involved in the biosynthesis of ajmaline-type monoterpenoid indole alkaloids (MIAs) natural products, important plant-derived pharmaceuticals used in the therapy of heart disorders. Deacetylates 17-O-acetylnorajmaline to produce norajmaline. May also catalyze the conversion of 17-O-acetylajmaline to ajmaline. This Rauvolfia serpentina (Serpentine wood) protein is Acetylajmalan esterase 1.